The sequence spans 248 residues: Homeobox protein Hox-A4 (248 aa).

The segment at 23–107 is disordered; the sequence is YQQSGYIPNP…PDGGAGANAS (85 aa). A compositionally biased stretch (basic and acidic residues) spans 35 to 51; sequence YYERPKDTGFPHHDEPS. The Antp-type hexapeptide motif lies at 128–133; the sequence is VYPWMK. A DNA-binding region (homeobox) is located at residues 149–208; sequence PKRSRTAYTRQQALELEKEFHFNRYLTRRRRVEIAHTMCLSERQVKIWFQNRRMKWKKEH. A disordered region spans residues 207 to 248; that stretch reads EHKLPNTKIRSSSSASSSASGAQQQQIKTGQQLVPTPCTAGL. Residues 217-238 are compositionally biased toward low complexity; it reads SSSSASSSASGAQQQQIKTGQQ.

It belongs to the Antp homeobox family. Deformed subfamily.

The protein localises to the nucleus. Functionally, sequence-specific transcription factor which is part of a developmental regulatory system that provides cells with specific positional identities on the anterior-posterior axis. This is Homeobox protein Hox-A4 (hoxa4) from Morone saxatilis (Striped bass).